A 176-amino-acid polypeptide reads, in one-letter code: MVTIALGSRNPVKINATKEALDVLKLNWDLIGIEVDSGVDKQPFCDQTYVGARNRALNVIRVTNADIGLGIEGGVCNVYGKFIANAVVYVITKEGLENFAISSSFTLPSSMVSLILQGKELGEASDIIFKTNNSKTKEGAIGLLTNNVINRKMLYVQPIVLALYPIYNTMINNTPF.

A Mg(2+)-binding site is contributed by D36.

Belongs to the YjjX NTPase family. As to quaternary structure, homodimer. Requires Mg(2+) as cofactor. Mn(2+) is required as a cofactor.

It catalyses the reaction XTP + H2O = XDP + phosphate + H(+). The catalysed reaction is ITP + H2O = IDP + phosphate + H(+). Phosphatase that hydrolyzes non-canonical purine nucleotides such as XTP and ITP to their respective diphosphate derivatives. Probably excludes non-canonical purines from DNA/RNA precursor pool, thus preventing their incorporation into DNA/RNA and avoiding chromosomal lesions. This Saccharolobus islandicus (strain M.16.4 / Kamchatka #3) (Sulfolobus islandicus) protein is Probable inosine/xanthosine triphosphatase.